Here is a 556-residue protein sequence, read N- to C-terminus: M-phase inducer phosphatase (556 aa).

Disordered stretches follow at residues Ser165–Arg186 and Thr257–Lys297. Positions Lys287–Lys297 are enriched in basic residues. The region spanning Met371–Tyr474 is the Rhodanese domain. Cys421 is a catalytic residue. A compositionally biased stretch (polar residues) spans Arg505–Pro516. The segment at Arg505 to Tyr556 is disordered.

The protein belongs to the MPI phosphatase family.

The enzyme catalyses O-phospho-L-tyrosyl-[protein] + H2O = L-tyrosyl-[protein] + phosphate. Functionally, this protein functions as a dosage-dependent inducer in mitotic control. It is a tyrosine protein phosphatase required for progression of the cell cycle. It may directly dephosphorylate p34(cdc2) and activate the p34(cdc2) kinase activity. This chain is M-phase inducer phosphatase (nimT), found in Emericella nidulans (strain FGSC A4 / ATCC 38163 / CBS 112.46 / NRRL 194 / M139) (Aspergillus nidulans).